The following is a 215-amino-acid chain: 3-isopropylmalate dehydratase small subunit (215 aa).

The protein belongs to the LeuD family. LeuD type 1 subfamily. Heterodimer of LeuC and LeuD.

It catalyses the reaction (2R,3S)-3-isopropylmalate = (2S)-2-isopropylmalate. Its pathway is amino-acid biosynthesis; L-leucine biosynthesis; L-leucine from 3-methyl-2-oxobutanoate: step 2/4. Functionally, catalyzes the isomerization between 2-isopropylmalate and 3-isopropylmalate, via the formation of 2-isopropylmaleate. In Xanthomonas axonopodis pv. citri (strain 306), this protein is 3-isopropylmalate dehydratase small subunit.